The chain runs to 408 residues: uncharacterized protein (408 aa).

Disordered stretches follow at residues 184–206 and 254–317; these read DENN…SILF and NNKT…SSDS. The span at 187-206 shows a compositional bias: low complexity; the sequence is NNNSNNNNNNNSNNNSSILF.

This is an uncharacterized protein from Dictyostelium discoideum (Social amoeba).